Consider the following 144-residue polypeptide: High mobility group B protein 2 (144 aa).

Composition is skewed to basic and acidic residues over residues 1-12 and 73-94; these read MKGAKSKTETRS and AGDK…KAEK. Disordered regions lie at residues 1–42, 57–94, and 106–144; these read MKGA…KRPA, KKEN…KAEK, and YNKK…EDDD. Residues 38–107 constitute a DNA-binding region (HMG box); that stretch reads PKRPASAFFV…EYEKNIKAYN (70 aa). Ser125 is subject to Phosphoserine. Positions 127-144 are enriched in acidic residues; that stretch reads VNDEDDAEDGSEEEEDDD.

It belongs to the HMGB family. As to expression, mostly expressed in cotyledons, hypocotyls, leaves, and flowers (excluding pedicels), also present in roots and stems.

The protein localises to the nucleus. It is found in the cytoplasm. The protein resides in the cytosol. Its function is as follows. Binds preferentially double-stranded DNA. Confers sensitivity to salt and drought stresses. The sequence is that of High mobility group B protein 2 (HMGB2) from Arabidopsis thaliana (Mouse-ear cress).